Reading from the N-terminus, the 178-residue chain is Ribosome maturation factor RimP (178 aa).

This sequence belongs to the RimP family.

The protein resides in the cytoplasm. In terms of biological role, required for maturation of 30S ribosomal subunits. This chain is Ribosome maturation factor RimP, found in Streptococcus pyogenes serotype M3 (strain ATCC BAA-595 / MGAS315).